The chain runs to 773 residues: Protein FAM149A (773 aa).

Low complexity-rich tracts occupy residues T18 to A37 and L54 to A90. Disordered stretches follow at residues T18–G155, D173–P210, F232–G264, and T568–L613. Over residues I174 to D186 the composition is skewed to acidic residues. The span at T245 to G264 shows a compositional bias: low complexity.

The protein belongs to the FAM149 family.

This chain is Protein FAM149A (FAM149A), found in Homo sapiens (Human).